The sequence spans 141 residues: Nucleoside diphosphate kinase (141 aa).

Positions 11, 59, 87, 93, 104, and 114 each coordinate ATP. Histidine 117 serves as the catalytic Pros-phosphohistidine intermediate.

This sequence belongs to the NDK family. In terms of assembly, homotetramer. The cofactor is Mg(2+).

The protein resides in the cytoplasm. It carries out the reaction a 2'-deoxyribonucleoside 5'-diphosphate + ATP = a 2'-deoxyribonucleoside 5'-triphosphate + ADP. The enzyme catalyses a ribonucleoside 5'-diphosphate + ATP = a ribonucleoside 5'-triphosphate + ADP. Major role in the synthesis of nucleoside triphosphates other than ATP. The ATP gamma phosphate is transferred to the NDP beta phosphate via a ping-pong mechanism, using a phosphorylated active-site intermediate. This Burkholderia ambifaria (strain MC40-6) protein is Nucleoside diphosphate kinase.